Here is a 56-residue protein sequence, read N- to C-terminus: Large ribosomal subunit protein eL40 (56 aa).

This sequence belongs to the eukaryotic ribosomal protein eL40 family.

This Sulfurisphaera tokodaii (strain DSM 16993 / JCM 10545 / NBRC 100140 / 7) (Sulfolobus tokodaii) protein is Large ribosomal subunit protein eL40.